The sequence spans 129 residues: Small ribosomal subunit protein uS11 (129 aa).

Belongs to the universal ribosomal protein uS11 family. In terms of assembly, part of the 30S ribosomal subunit. Interacts with proteins S7 and S18. Binds to IF-3.

Functionally, located on the platform of the 30S subunit, it bridges several disparate RNA helices of the 16S rRNA. Forms part of the Shine-Dalgarno cleft in the 70S ribosome. The sequence is that of Small ribosomal subunit protein uS11 from Nitratidesulfovibrio vulgaris (strain ATCC 29579 / DSM 644 / CCUG 34227 / NCIMB 8303 / VKM B-1760 / Hildenborough) (Desulfovibrio vulgaris).